We begin with the raw amino-acid sequence, 72 residues long: SRY-related protein MG43 (72 aa).

Positions 1–69 (VKRPMNAFMV…KHMADYPDYK (69 aa)) form a DNA-binding region, HMG box.

The protein resides in the nucleus. This chain is SRY-related protein MG43, found in Tarentola mauritanica (Common wall gecko).